Here is a 277-residue protein sequence, read N- to C-terminus: MNWIEAALLGLVQGLTEFLPISSSAHLRIVGSFLPNAADPGAAFTAITQLGTETAVIVYFWRDIVRIVQAWFGSLTGKVERNNPDARMGWLVILGSLPIIVLGLLFQDQIESVLRSMWIVATMLIVFGMILAVADAVGRQERDLTQLSYKHGILYGFAQAMALIPGVSRSGGTITAGLLMGYTREAAARYSFLLAIPAVFGSGLYQLYKTVSNEGLAGPYGLPETALATVIAFVVGYVIIGWFLKFVSTRSYRLFVWYRILLGLALYVLLGFNVISA.

Helical transmembrane passes span 88–108, 117–137, 157–179, 191–211, 227–247, and 255–275; these read MGWL…LFQD, MWIV…ADAV, FAQA…AGLL, SFLL…YKTV, LATV…LKFV, and FVWY…FNVI.

Belongs to the UppP family.

It localises to the cell membrane. It catalyses the reaction di-trans,octa-cis-undecaprenyl diphosphate + H2O = di-trans,octa-cis-undecaprenyl phosphate + phosphate + H(+). In terms of biological role, catalyzes the dephosphorylation of undecaprenyl diphosphate (UPP). Confers resistance to bacitracin. The chain is Undecaprenyl-diphosphatase from Paenarthrobacter aurescens (strain TC1).